The chain runs to 92 residues: Larval cuticle protein 9 (92 aa).

A signal peptide spans 1-16 (MKFVIVLACLLAVVFA). Residues 31–92 (LLDFNYAYEL…TGYHPKVVEA (62 aa)) enclose the Chitin-binding type R&amp;R domain.

Its function is as follows. Component of the cuticle of the larva. This chain is Larval cuticle protein 9 (Lcp9), found in Drosophila melanogaster (Fruit fly).